A 119-amino-acid chain; its full sequence is uncharacterized protein (119 aa).

Residues 74-91 (LSVHFLLNVISAILSMLI) traverse the membrane as a helical segment.

It localises to the membrane. This is an uncharacterized protein from Schizosaccharomyces pombe (strain 972 / ATCC 24843) (Fission yeast).